Consider the following 158-residue polypeptide: Glutathione peroxidase homolog BsaA (158 aa).

Cysteine 36 is a catalytic residue.

Belongs to the glutathione peroxidase family.

This chain is Glutathione peroxidase homolog BsaA (bsaA), found in Staphylococcus epidermidis (strain ATCC 12228 / FDA PCI 1200).